A 275-amino-acid chain; its full sequence is 2,3,4,5-tetrahydropyridine-2,6-dicarboxylate N-succinyltransferase (275 aa).

2 residues coordinate substrate: R104 and D141.

This sequence belongs to the transferase hexapeptide repeat family. Homotrimer.

The protein localises to the cytoplasm. The enzyme catalyses (S)-2,3,4,5-tetrahydrodipicolinate + succinyl-CoA + H2O = (S)-2-succinylamino-6-oxoheptanedioate + CoA. It functions in the pathway amino-acid biosynthesis; L-lysine biosynthesis via DAP pathway; LL-2,6-diaminopimelate from (S)-tetrahydrodipicolinate (succinylase route): step 1/3. This is 2,3,4,5-tetrahydropyridine-2,6-dicarboxylate N-succinyltransferase from Actinobacillus succinogenes (strain ATCC 55618 / DSM 22257 / CCUG 43843 / 130Z).